The primary structure comprises 519 residues: Aldehyde dehydrogenase X, mitochondrial (519 aa).

The N-terminal 19 residues, 1-19 (MLTARLLLPRLLCLQGRTT), are a transit peptide targeting the mitochondrion. Lys53 is modified (N6-acetyllysine). Residue Lys54 is modified to N6-acetyllysine; alternate. Residue Lys54 is modified to N6-succinyllysine; alternate. Residue Lys83 is modified to N6-succinyllysine. 264–269 (GSTEVG) lines the NAD(+) pocket. Glu287 acts as the Proton acceptor in catalysis. Catalysis depends on Cys321, which acts as the Nucleophile. Residues Lys366, Lys385, Lys401, Lys416, and Lys428 each carry the N6-acetyllysine; alternate modification. N6-succinyllysine; alternate occurs at positions 366, 385, 401, 416, and 428. Lys431 carries the N6-acetyllysine modification.

It belongs to the aldehyde dehydrogenase family. As to quaternary structure, homotetramer.

It is found in the mitochondrion matrix. It carries out the reaction an aldehyde + NAD(+) + H2O = a carboxylate + NADH + 2 H(+). Its pathway is alcohol metabolism; ethanol degradation; acetate from ethanol: step 2/2. ALDHs play a major role in the detoxification of alcohol-derived acetaldehyde. They are involved in the metabolism of corticosteroids, biogenic amines, neurotransmitters, and lipid peroxidation. The sequence is that of Aldehyde dehydrogenase X, mitochondrial (Aldh1b1) from Mus musculus (Mouse).